The chain runs to 158 residues: Extracellular giant hemoglobin major globin subunit A2 (158 aa).

The N-terminal stretch at 1-16 is a signal peptide; the sequence is MKSLIVFACLVAYAAA. The 142-residue stretch at 17-158 folds into the Globin domain; the sequence is DCTSLNRLLV…MNQIVSGISG (142 aa). Cys-18 and Cys-148 are joined by a disulfide. Position 89 (Cys-89) interacts with hydrogen sulfide. Residue His-110 coordinates heme b.

Belongs to the globin family. As to quaternary structure, the 400 kDa hemoglobin consists of a spherical 24-mer arranged as a double layer of dome-shaped dodecamers. Each dodecamer is composed of the 3-fold trimer of the tetramer A1-A2-B1-B2 having one intra-tetramer (A1-B2) disulfide bond and one inter-tetramer (B1-B2) disulfide bond per tetramer.

Its subcellular location is the secreted. The extracellular giant hemoglobin is able to bind and transport oxygen and hydrosulfide simultaneously and reversibly at two different sites. The chain is Extracellular giant hemoglobin major globin subunit A2 (ghbA2) from Oligobrachia mashikoi (Beard worm).